Reading from the N-terminus, the 547-residue chain is uncharacterized protein (547 aa).

12 helical membrane-spanning segments follow: residues 33–53 (PTFFFALFSAAYVFIDQIMVI), 107–127 (PLIVLLNAINIFIPLGTGVIF), 145–165 (TGLISTTVFGLITQFLVLSFA), 203–223 (VYILIGLNIIPMLSRLFFYLA), 231–251 (FIAIVPPIANLINILIVFLLV), 263–283 (VAGILGYLINFLAYIIYLIYL), 298–318 (LNKIDFNLLVVVSLIGMASFF), 351–371 (TLLTGPIAISNLASAAIFGLL), 397–417 (TVIICISFGSLIYLLTAVAFG), 432–452 (LDLANYFSLIVQAQVFFVATG), 470–490 (IVSLTHGLFVFIPLLFIFQAI), and 499–519 (VFIWLLTANAALAGLINIAFG).

It is found in the cell membrane. This is an uncharacterized protein from Mycoplasma genitalium (strain ATCC 33530 / DSM 19775 / NCTC 10195 / G37) (Mycoplasmoides genitalium).